We begin with the raw amino-acid sequence, 279 residues long: Undecaprenyl-diphosphatase (279 aa).

8 helical membrane-spanning segments follow: residues 2–22, 44–64, 85–105, 113–133, 163–183, 188–208, 223–243, and 255–275; these read LIIE…TEWL, AFIE…VMLI, WQLW…AVPL, FYFM…FIWI, VLSI…AIIL, TVAA…YSGL, AQVL…LLAI, and FTIF…YSFF.

The protein belongs to the UppP family.

It is found in the cell membrane. The catalysed reaction is di-trans,octa-cis-undecaprenyl diphosphate + H2O = di-trans,octa-cis-undecaprenyl phosphate + phosphate + H(+). In terms of biological role, catalyzes the dephosphorylation of undecaprenyl diphosphate (UPP). Confers resistance to bacitracin. The chain is Undecaprenyl-diphosphatase from Streptococcus pyogenes serotype M28 (strain MGAS6180).